We begin with the raw amino-acid sequence, 148 residues long: Large ribosomal subunit protein uL15 (148 aa).

The interval 1-57 (MRLNDVKPQKGSKKRRRRVGRGISAGQGASAGLGMRGQKSRSGSGTRPGFEGGQQPL) is disordered. Positions 10–20 (KGSKKRRRRVG) are enriched in basic residues. Residues 23-35 (ISAGQGASAGLGM) are compositionally biased toward gly residues.

This sequence belongs to the universal ribosomal protein uL15 family. As to quaternary structure, part of the 50S ribosomal subunit.

In terms of biological role, binds to the 23S rRNA. The polypeptide is Large ribosomal subunit protein uL15 (Trichormus variabilis (strain ATCC 29413 / PCC 7937) (Anabaena variabilis)).